The sequence spans 786 residues: ATP-dependent RNA helicase SUPV3L1, mitochondrial (786 aa).

The N-terminal 22 residues, 1–22 (MSFSRALLWARLPAGRQAGHRA), are a transit peptide targeting the mitochondrion. At K99 the chain carries N6-acetyllysine. One can recognise a Helicase ATP-binding domain in the interval 194–334 (DARAMQRKII…AIDLVMELMY (141 aa)). An ATP-binding site is contributed by 207-214 (GPTNSGKT). An N6-acetyllysine modification is found at K220. The region spanning 353–518 (VLDHALESLD…GLHPTAEQIE (166 aa)) is the Helicase C-terminal domain. The interval 650 to 786 (PDASLIRDLQ…RRKKKEPDSD (137 aa)) is interaction with LAMTOR5, important for protein stability. Disordered stretches follow at residues 690–730 (GFPS…DAGE) and 749–786 (KQLEKEWMTQQTEHNKEKTESGTHPKGTRRKKKEPDSD). Positions 693 to 705 (SGSQSRLSGTLKS) are enriched in polar residues. The residue at position 725 (S725) is a Phosphoserine. The segment covering 749 to 771 (KQLEKEWMTQQTEHNKEKTESGT) has biased composition (basic and acidic residues).

The protein belongs to the helicase family. In terms of assembly, homodimer; in free form. Component of the mitochondrial degradosome (mtEXO) complex which is a heteropentamer containing 2 copies of SUPV3L1 and 3 copies of PNPT1. As part of mitochondrial degradosome complex, interacts with GRSF1 in a RNA-dependent manner; the interaction enhances the activity of the complex. Interacts with LAMTOR5/HBXIP, WRN and BLM. The cofactor is Mg(2+). Mn(2+) is required as a cofactor. Broadly expressed.

It is found in the nucleus. The protein resides in the mitochondrion matrix. The protein localises to the mitochondrion nucleoid. The enzyme catalyses ATP + H2O = ADP + phosphate + H(+). Its activity is regulated as follows. Helicase activity toward DNA substrate is inhibited by micromolar concentrations of 5,6-dichloro-1-(beta-D-ribofuranosyl)benzotriazole (DRBT) and 4,5,6,7-tetrabromobenzotriazole (TBBT). Helicase activity toward RNA substrate is inhibited by elevated concentrations of TBBT. Inhibited by some ring-expanded nucleoside analogs. Its function is as follows. Major helicase player in mitochondrial RNA metabolism. Component of the mitochondrial degradosome (mtEXO) complex, that degrades 3' overhang double-stranded RNA with a 3'-to-5' directionality in an ATP-dependent manner. Involved in the degradation of non-coding mitochondrial transcripts (MT-ncRNA) and tRNA-like molecules. ATPase and ATP-dependent multisubstrate helicase, able to unwind double-stranded (ds) DNA and RNA, and RNA/DNA heteroduplexes in the 5'-to-3' direction. Plays a role in the RNA surveillance system in mitochondria; regulates the stability of mature mRNAs, the removal of aberrantly formed mRNAs and the rapid degradation of non coding processing intermediates. Also implicated in recombination and chromatin maintenance pathways. May protect cells from apoptosis. Associates with mitochondrial DNA. The protein is ATP-dependent RNA helicase SUPV3L1, mitochondrial (SUPV3L1) of Homo sapiens (Human).